The primary structure comprises 78 residues: MRSAVIVTMLVVVALAALLTQGQDLKYQEREMVAELAQQIYRVAQAPWAGAVGPHKRNSELINSILGLPKVMNDAGRR.

An N-terminal signal peptide occupies residues 1 to 22 (MRSAVIVTMLVVVALAALLTQG). Ala-75 is subject to Alanine amide.

Belongs to the arthropod PDH family. Expressed in eyestalk tissue and cerebral ganglia.

Its subcellular location is the secreted. Its function is as follows. The pigment-dispersing hormone causes the migration of the distal retinal pigment into the proximal end of the pigment chromatophore cells and thus decreases the amount of light entering the retinulas. May also function as a neurotransmitter and/or neuromodulator. The sequence is that of Pigment-dispersing hormone peptides from Carcinus maenas (Common shore crab).